Consider the following 417-residue polypeptide: uncharacterized protein (417 aa).

This is an uncharacterized protein from Sulfolobus islandicus rod-shaped virus 1 (SIRV-1).